The chain runs to 423 residues: MPNTPHTMNLYIKNIAQLVTCQGSEAKHGREAMGQIHTIEGPAAVVIRDGIIAFAGRMADVAPSMTEGCRELDATGRCVLPGFVDSHTHLVFGGYREDEFQWRLAGDSYMSIMERGGGIASTMRATRSESEDELKASARRHLSNMMKMGVTTVEAKSGYGMNLETELKQLRVVRDLQDEQPLDLYSTFMGAHDTAPEYKGRPTEFIEYLCREVLPEVVRQNLAECCDIFTEKGVFDHEQTRRMLTAAKEAGLSVKMHADEIVPFGGAELAAELGCLSADHLLRISDAGIKALAESNTVATLLPCTAFSLRADYAPARKMIDAGCAVALGSDLNPGSCFSASVPLMFALATLYMGMTVEEAITALTINGAAAIGRADTIGSIEPGKKGDLVVLQYPSYKFLSYHFGMNLVEHTVKGGRVVYTNS.

2 residues coordinate Fe(3+): His-87 and His-89. Residues His-87 and His-89 each coordinate Zn(2+). 4-imidazolone-5-propanoate is bound by residues Arg-96, Tyr-159, and His-192. Position 159 (Tyr-159) interacts with N-formimidoyl-L-glutamate. A Fe(3+)-binding site is contributed by His-257. Position 257 (His-257) interacts with Zn(2+). A 4-imidazolone-5-propanoate-binding site is contributed by Glu-260. A Fe(3+)-binding site is contributed by Asp-331. Asp-331 is a Zn(2+) binding site. Residues Asn-333 and Gly-335 each contribute to the N-formimidoyl-L-glutamate site. Ser-336 lines the 4-imidazolone-5-propanoate pocket.

The protein belongs to the metallo-dependent hydrolases superfamily. HutI family. The cofactor is Zn(2+). Fe(3+) serves as cofactor.

It localises to the cytoplasm. It catalyses the reaction 4-imidazolone-5-propanoate + H2O = N-formimidoyl-L-glutamate. Its pathway is amino-acid degradation; L-histidine degradation into L-glutamate; N-formimidoyl-L-glutamate from L-histidine: step 3/3. Functionally, catalyzes the hydrolytic cleavage of the carbon-nitrogen bond in imidazolone-5-propanoate to yield N-formimidoyl-L-glutamate. It is the third step in the universal histidine degradation pathway. This Porphyromonas gingivalis (strain ATCC BAA-308 / W83) protein is Imidazolonepropionase.